We begin with the raw amino-acid sequence, 112 residues long: Histone H3-4 (112 aa).

Positions 1 to 31 (QTGAKAPRKALANKAARKTAPADGGVKKPHR) are disordered.

Belongs to the histone H3 family. As to quaternary structure, the nucleosome is a histone octamer containing two molecules each of H2A, H2B, H3 and H4 assembled in one H3-H4 heterotetramer and two H2A-H2B heterodimers. The octamer wraps approximately 147 bp of DNA.

Its subcellular location is the nucleus. It is found in the chromosome. Core component of nucleosome. Nucleosomes wrap and compact DNA into chromatin, limiting DNA accessibility to the cellular machineries which require DNA as a template. Histones thereby play a central role in transcription regulation, DNA repair, DNA replication and chromosomal stability. DNA accessibility is regulated via a complex set of post-translational modifications of histones, also called histone code, and nucleosome remodeling. The polypeptide is Histone H3-4 (H3-4) (Stylonychia lemnae (Ciliate)).